Reading from the N-terminus, the 307-residue chain is Homoserine kinase (307 aa).

86 to 96 (PIARGLGSSAA) contacts ATP.

Belongs to the GHMP kinase family. Homoserine kinase subfamily.

Its subcellular location is the cytoplasm. The enzyme catalyses L-homoserine + ATP = O-phospho-L-homoserine + ADP + H(+). The protein operates within amino-acid biosynthesis; L-threonine biosynthesis; L-threonine from L-aspartate: step 4/5. In terms of biological role, catalyzes the ATP-dependent phosphorylation of L-homoserine to L-homoserine phosphate. This is Homoserine kinase from Petrotoga mobilis (strain DSM 10674 / SJ95).